The primary structure comprises 230 residues: Ribosomal RNA small subunit methyltransferase G (230 aa).

S-adenosyl-L-methionine is bound by residues G93, L98, 144 to 145, and R158; that span reads IE.

It belongs to the methyltransferase superfamily. RNA methyltransferase RsmG family.

It localises to the cytoplasm. It carries out the reaction guanosine(527) in 16S rRNA + S-adenosyl-L-methionine = N(7)-methylguanosine(527) in 16S rRNA + S-adenosyl-L-homocysteine. Its function is as follows. Specifically methylates the N7 position of guanine in position 527 of 16S rRNA. The chain is Ribosomal RNA small subunit methyltransferase G from Bordetella parapertussis (strain 12822 / ATCC BAA-587 / NCTC 13253).